Reading from the N-terminus, the 433-residue chain is Elongation factor 1-alpha (433 aa).

The region spanning 5–220 (KPHINVVFIG…ALDMLKPPQL (216 aa)) is the tr-type G domain. The segment at 14–21 (GHVDHGKS) is G1. Residue 14–21 (GHVDHGKS) coordinates GTP. Mg(2+) is bound at residue Ser21. The interval 70–74 (GVTID) is G2. Residues 91 to 94 (DAPG) are G3. GTP-binding positions include 91 to 95 (DAPGH) and 146 to 149 (NKMD). The G4 stretch occupies residues 146-149 (NKMD). Residues 186 to 188 (ASF) form a G5 region.

Belongs to the TRAFAC class translation factor GTPase superfamily. Classic translation factor GTPase family. EF-Tu/EF-1A subfamily.

It is found in the cytoplasm. It catalyses the reaction GTP + H2O = GDP + phosphate + H(+). GTP hydrolase that promotes the GTP-dependent binding of aminoacyl-tRNA to the A-site of ribosomes during protein biosynthesis. The protein is Elongation factor 1-alpha of Nanoarchaeum equitans (strain Kin4-M).